A 224-amino-acid polypeptide reads, in one-letter code: ATP-dependent dethiobiotin synthetase BioD (224 aa).

13–18 provides a ligand contact to ATP; the sequence is NVGKTI. Mg(2+) is bound at residue threonine 17. Lysine 38 is a catalytic residue. Serine 42 provides a ligand contact to substrate. ATP-binding positions include aspartate 55, 116–119, 176–177, and asparagine 211; these read EGAG and NN. Mg(2+)-binding residues include aspartate 55 and glutamate 116.

It belongs to the dethiobiotin synthetase family. As to quaternary structure, homodimer. The cofactor is Mg(2+).

The protein resides in the cytoplasm. The enzyme catalyses (7R,8S)-7,8-diammoniononanoate + CO2 + ATP = (4R,5S)-dethiobiotin + ADP + phosphate + 3 H(+). It participates in cofactor biosynthesis; biotin biosynthesis; biotin from 7,8-diaminononanoate: step 1/2. Catalyzes a mechanistically unusual reaction, the ATP-dependent insertion of CO2 between the N7 and N8 nitrogen atoms of 7,8-diaminopelargonic acid (DAPA, also called 7,8-diammoniononanoate) to form a ureido ring. This Buchnera aphidicola subsp. Acyrthosiphon pisum (strain 5A) protein is ATP-dependent dethiobiotin synthetase BioD.